The chain runs to 89 residues: MAKKCVVVRNEKRKQIVEKYASKREELKKQGDYEALRKLPRDSSPTRLKNRCSITGRAKGVYKKFGLCRHILRKYALEGKIPGMKKASW.

This sequence belongs to the universal ribosomal protein uS14 family. In terms of assembly, part of the 30S ribosomal subunit. Contacts proteins S3 and S10.

Binds 16S rRNA, required for the assembly of 30S particles and may also be responsible for determining the conformation of the 16S rRNA at the A site. In Chloroherpeton thalassium (strain ATCC 35110 / GB-78), this protein is Small ribosomal subunit protein uS14.